The following is a 493-amino-acid chain: MSKVDLWQDATAQAELVRSGEISRTELLEATIAHVQAVNPEINAVIIPLFEKARRESELASGPFAGVPYLLKDLTVVSQGDINTSSIKGMKESGYRADHDAYFVQRMRAAGFVLLGKVNTPEMGTQVTTEPEAWGATRNPWNLGRSVGGSSGGSGAAVAAALSPVAHGNDAAGSVRIPASVCGVVGLKPTRGRISPGPLVTDSDNVAGAAHEGLFARSVRDIAALLDVVSGHRPGDTFCAPTASRPYAQGISENPGSLRVGVLTHNPVGDFALDPECAAAARGAAAALAALGHDVNDAYPEALGDRSFLKDYLTICDVAIAREIERNGELIGRPLTEDDVEWTSWEMVKRADQVTGRAFAACVDELRYYAGKVERWWEAGWDLLILPTVTRQTPEIGELMLAKGTDLEGRHTALISGSLRMLAFTVPFNVSGQPAISLPIGMSSDGMPIGVQIVAAYGREDLLLQVAAQLEGALPWVARRPQLLNPSRKIPAA.

Residues Lys72 and Ser150 each act as charge relay system in the active site. Ser174 serves as the catalytic Acyl-ester intermediate.

It belongs to the amidase family. In terms of assembly, homodimer.

It carries out the reaction 1,8-diazacyclotetradecane-2,9-dione + H2O = N-(6-aminohexanoyl)-6-aminohexanoate. Its pathway is xenobiotic degradation; nylon-6 oligomer degradation. Functionally, catalyzes the hydrolysis of 6-aminohexanoic acid cyclic dimer (1,8-diazacyclotetradecane-2,9-dione) to form the linear dimer 6-aminohexanoyl-6-aminohexanoic acid. In Pseudomonas sp. (strain NK87), this protein is 6-aminohexanoate-cyclic-dimer hydrolase (nylA).